The following is a 294-amino-acid chain: Homoserine kinase (294 aa).

Residue 83–93 (PLARGLGSSAS) coordinates ATP.

It belongs to the GHMP kinase family. Homoserine kinase subfamily.

The protein localises to the cytoplasm. It carries out the reaction L-homoserine + ATP = O-phospho-L-homoserine + ADP + H(+). Its pathway is amino-acid biosynthesis; L-threonine biosynthesis; L-threonine from L-aspartate: step 4/5. In terms of biological role, catalyzes the ATP-dependent phosphorylation of L-homoserine to L-homoserine phosphate. This chain is Homoserine kinase, found in Oceanobacillus iheyensis (strain DSM 14371 / CIP 107618 / JCM 11309 / KCTC 3954 / HTE831).